The sequence spans 75 residues: Protein B7 (75 aa).

This Human herpesvirus 6B (strain Z29) (HHV-6 variant B) protein is Protein B7 (B7).